Here is a 244-residue protein sequence, read N- to C-terminus: PF03932 family protein CutC (244 aa).

The protein belongs to the CutC family.

It localises to the cytoplasm. This Pasteurella multocida (strain Pm70) protein is PF03932 family protein CutC.